The chain runs to 515 residues: Ribosome assembly protein 4 (515 aa).

Residues 20 to 128 are interaction with MDN1; that stretch reads REVAIIPKDL…LLYTPRAVFK (109 aa). The ubiquitin-like (UBL) domain stretch occupies residues 29–125; sequence LPNVSIKFQA…QITLLYTPRA (97 aa). WD repeat units follow at residues 141–181, 184–223, 227–273, 276–314, 352–396, 400–439, 442–481, and 484–515; these read GHGS…PMHT, GHYNWVLCVSWSPDGEVIATGSMDNTIRLWDPKSGQCLGD, GHSK…CQYT, GHTNSVSCVKWGGQGLLYSGSHDRTVRVWDINSQGRCIN, AQKK…KPIA, GHQKLVNHVAFSPDGRYIVSASFDNSIKLWDGRDGKFIST, GHVASVYQVAWSSDCRLLVSCSKDTTLKVWDVRTRKLSVD, and GHKDEVYTVDWSVDGKRVCSGGKDKMVRLWTH.

It belongs to the NLE1/RSA4 family. As to quaternary structure, associates with the pre-60S ribosomal particle. Interacts (via WD repeats) with uL18 (RPL5). Interacts (via UBL domain) with MDN1 (via VWFA/MIDAS domain). Interacts (via WD repeats) with NSA2.

The protein localises to the nucleus. It localises to the nucleolus. Functionally, involved in ribosome biogenesis. Required for processing and efficient intra-nuclear transport of pre-60S ribosomal subunits. Interacts with the AAA-ATPase Midasin (MDN1/REA1), which is essential for the ATP-dependent dissociation of a group of nonribosomal factors from the pre-60S particle. This chain is Ribosome assembly protein 4, found in Saccharomyces cerevisiae (strain ATCC 204508 / S288c) (Baker's yeast).